The chain runs to 258 residues: Ribosomal RNA small subunit methyltransferase J (258 aa).

Residues 106–107, 122–123, and aspartate 181 contribute to the S-adenosyl-L-methionine site; these read RD and ER.

The protein belongs to the methyltransferase superfamily. RsmJ family.

It localises to the cytoplasm. The catalysed reaction is guanosine(1516) in 16S rRNA + S-adenosyl-L-methionine = N(2)-methylguanosine(1516) in 16S rRNA + S-adenosyl-L-homocysteine + H(+). Specifically methylates the guanosine in position 1516 of 16S rRNA. This is Ribosomal RNA small subunit methyltransferase J from Pseudoalteromonas atlantica (strain T6c / ATCC BAA-1087).